An 84-amino-acid polypeptide reads, in one-letter code: MVIIRLARGGSKKRPFYNIVATDSRNRRDGRFIERVGFYNPVATKGESLRIAQDRLTYWQGVGAQLSPTVERLVKEAAKAQPAA.

Belongs to the bacterial ribosomal protein bS16 family.

The chain is Small ribosomal subunit protein bS16 from Paraburkholderia phytofirmans (strain DSM 17436 / LMG 22146 / PsJN) (Burkholderia phytofirmans).